We begin with the raw amino-acid sequence, 295 residues long: Fructose-bisphosphate aldolase class 1 (295 aa).

The active-site Proton acceptor is the glutamate 176. Lysine 213 acts as the Schiff-base intermediate with dihydroxyacetone-P in catalysis.

It belongs to the class I fructose-bisphosphate aldolase family.

The enzyme catalyses beta-D-fructose 1,6-bisphosphate = D-glyceraldehyde 3-phosphate + dihydroxyacetone phosphate. It participates in carbohydrate degradation; glycolysis; D-glyceraldehyde 3-phosphate and glycerone phosphate from D-glucose: step 4/4. The sequence is that of Fructose-bisphosphate aldolase class 1 from Clostridium acetobutylicum (strain ATCC 824 / DSM 792 / JCM 1419 / IAM 19013 / LMG 5710 / NBRC 13948 / NRRL B-527 / VKM B-1787 / 2291 / W).